The chain runs to 161 residues: Phosphopantetheine adenylyltransferase (161 aa).

S8 is a substrate binding site. Residues 8–9 (SF) and H16 each bind ATP. The substrate site is built by K40, T72, and R86. ATP-binding positions include 87-89 (GLR), E97, and 122-128 (HSFLSSS).

It belongs to the bacterial CoaD family. As to quaternary structure, homohexamer. The cofactor is Mg(2+).

Its subcellular location is the cytoplasm. It carries out the reaction (R)-4'-phosphopantetheine + ATP + H(+) = 3'-dephospho-CoA + diphosphate. It participates in cofactor biosynthesis; coenzyme A biosynthesis; CoA from (R)-pantothenate: step 4/5. Functionally, reversibly transfers an adenylyl group from ATP to 4'-phosphopantetheine, yielding dephospho-CoA (dPCoA) and pyrophosphate. In Gloeobacter violaceus (strain ATCC 29082 / PCC 7421), this protein is Phosphopantetheine adenylyltransferase.